The following is a 428-amino-acid chain: Elongation factor 1-alpha (428 aa).

The tr-type G domain maps to 5–217 (KPHVNIVFIG…DQIPEPEKPV (213 aa)). Positions 14–21 (GHVDHGKS) are G1. Position 14 to 21 (14 to 21 (GHVDHGKS)) interacts with GTP. S21 is a Mg(2+) binding site. The segment at 68 to 72 (GITID) is G2. The tract at residues 89–92 (DAPG) is G3. Residues 89 to 93 (DAPGH) and 144 to 147 (NKMD) contribute to the GTP site. The tract at residues 144–147 (NKMD) is G4. The interval 181-183 (SAW) is G5.

The protein belongs to the TRAFAC class translation factor GTPase superfamily. Classic translation factor GTPase family. EF-Tu/EF-1A subfamily.

It localises to the cytoplasm. It carries out the reaction GTP + H2O = GDP + phosphate + H(+). In terms of biological role, GTP hydrolase that promotes the GTP-dependent binding of aminoacyl-tRNA to the A-site of ribosomes during protein biosynthesis. In Pyrococcus abyssi (strain GE5 / Orsay), this protein is Elongation factor 1-alpha.